A 164-amino-acid chain; its full sequence is Phosphopantetheine adenylyltransferase (164 aa).

S9 contacts substrate. Residues 9–10 (SF) and H17 contribute to the ATP site. Substrate contacts are provided by K41, L73, and K87. ATP contacts are provided by residues 88-90 (GLR), E98, and 123-129 (YSYLSSS).

This sequence belongs to the bacterial CoaD family. As to quaternary structure, homohexamer. The cofactor is Mg(2+).

Its subcellular location is the cytoplasm. The enzyme catalyses (R)-4'-phosphopantetheine + ATP + H(+) = 3'-dephospho-CoA + diphosphate. It functions in the pathway cofactor biosynthesis; coenzyme A biosynthesis; CoA from (R)-pantothenate: step 4/5. Its function is as follows. Reversibly transfers an adenylyl group from ATP to 4'-phosphopantetheine, yielding dephospho-CoA (dPCoA) and pyrophosphate. The polypeptide is Phosphopantetheine adenylyltransferase (Clostridium botulinum (strain 657 / Type Ba4)).